Reading from the N-terminus, the 463-residue chain is Cysteine--tRNA ligase (463 aa).

Cys-29 contributes to the Zn(2+) binding site. The 'HIGH' region motif lies at 31-41 (PTVYDFAHIGN). 3 residues coordinate Zn(2+): Cys-227, His-252, and Glu-256. Residues 285–289 (KMSKS) carry the 'KMSKS' region motif. Lys-288 serves as a coordination point for ATP.

It belongs to the class-I aminoacyl-tRNA synthetase family. As to quaternary structure, monomer. Requires Zn(2+) as cofactor.

Its subcellular location is the cytoplasm. The catalysed reaction is tRNA(Cys) + L-cysteine + ATP = L-cysteinyl-tRNA(Cys) + AMP + diphosphate. In Rhodopseudomonas palustris (strain ATCC BAA-98 / CGA009), this protein is Cysteine--tRNA ligase.